Reading from the N-terminus, the 134-residue chain is Arsenate reductase (134 aa).

Active-site nucleophile residues include cysteine 11, cysteine 83, and cysteine 90. 2 cysteine pairs are disulfide-bonded: cysteine 11-cysteine 83 and cysteine 83-cysteine 90.

Belongs to the low molecular weight phosphotyrosine protein phosphatase family. Thioredoxin-coupled ArsC subfamily.

The protein resides in the cytoplasm. It catalyses the reaction arsenate + [thioredoxin]-dithiol + H(+) = arsenite + [thioredoxin]-disulfide + H2O. Its function is as follows. Catalyzes the reduction of arsenate [As(V)] to arsenite [As(III)]. In Brevibacillus brevis (strain 47 / JCM 6285 / NBRC 100599), this protein is Arsenate reductase.